The sequence spans 379 residues: Eukaryotic translation initiation factor 3 subunit M (379 aa).

Residues 179-341 (RSEEASKVMI…RKVIISSVAQ (163 aa)) enclose the PCI domain.

It belongs to the eIF-3 subunit M family. As to quaternary structure, component of the eukaryotic translation initiation factor 3 (eIF-3) complex.

It localises to the cytoplasm. Component of the eukaryotic translation initiation factor 3 (eIF-3) complex, which is involved in protein synthesis of a specialized repertoire of mRNAs and, together with other initiation factors, stimulates binding of mRNA and methionyl-tRNAi to the 40S ribosome. The eIF-3 complex specifically targets and initiates translation of a subset of mRNAs involved in cell proliferation. The sequence is that of Eukaryotic translation initiation factor 3 subunit M from Nematostella vectensis (Starlet sea anemone).